The sequence spans 286 residues: Diaminopimelate epimerase (286 aa).

N13 and N66 together coordinate substrate. C75 acts as the Proton donor in catalysis. Substrate is bound by residues 76-77 (GN), N165, N198, and 216-217 (ER). The Proton acceptor role is filled by C225. Substrate is bound at residue 226–227 (GT).

The protein belongs to the diaminopimelate epimerase family. In terms of assembly, homodimer.

The protein resides in the cytoplasm. It carries out the reaction (2S,6S)-2,6-diaminopimelate = meso-2,6-diaminopimelate. It functions in the pathway amino-acid biosynthesis; L-lysine biosynthesis via DAP pathway; DL-2,6-diaminopimelate from LL-2,6-diaminopimelate: step 1/1. Functionally, catalyzes the stereoinversion of LL-2,6-diaminopimelate (L,L-DAP) to meso-diaminopimelate (meso-DAP), a precursor of L-lysine and an essential component of the bacterial peptidoglycan. In Oceanobacillus iheyensis (strain DSM 14371 / CIP 107618 / JCM 11309 / KCTC 3954 / HTE831), this protein is Diaminopimelate epimerase.